Here is a 32-residue protein sequence, read N- to C-terminus: Protamine-3A (32 aa).

Positions 1-32 are disordered; sequence PRRRRRSSSRPIRRRRRPRVSRRRRRGGRRRR.

In terms of tissue distribution, testis.

Its subcellular location is the nucleus. It is found in the chromosome. Its function is as follows. Protamines substitute for histones in the chromatin of sperm during the haploid phase of spermatogenesis. They compact sperm DNA into a highly condensed, stable and inactive complex. In Oncorhynchus mykiss (Rainbow trout), this protein is Protamine-3A.